We begin with the raw amino-acid sequence, 363 residues long: tRNA (guanine(26)-N(2))-dimethyltransferase (363 aa).

Positions 5-352 (VLRREGGVKF…GEYGEVLMAF (348 aa)) constitute a Trm1 methyltransferase domain. Residues arginine 40, arginine 67, aspartate 85, aspartate 111, and alanine 112 each contribute to the S-adenosyl-L-methionine site.

The protein belongs to the class I-like SAM-binding methyltransferase superfamily. Trm1 family.

The enzyme catalyses guanosine(26) in tRNA + 2 S-adenosyl-L-methionine = N(2)-dimethylguanosine(26) in tRNA + 2 S-adenosyl-L-homocysteine + 2 H(+). Its function is as follows. Dimethylates a single guanine residue at position 26 of a number of tRNAs using S-adenosyl-L-methionine as donor of the methyl groups. The protein is tRNA (guanine(26)-N(2))-dimethyltransferase of Pyrobaculum aerophilum (strain ATCC 51768 / DSM 7523 / JCM 9630 / CIP 104966 / NBRC 100827 / IM2).